The chain runs to 184 residues: Nucleoside triphosphate pyrophosphatase (184 aa).

Residue Asp-71 is the Proton acceptor of the active site.

It belongs to the Maf family. A divalent metal cation is required as a cofactor.

It localises to the cytoplasm. It catalyses the reaction a ribonucleoside 5'-triphosphate + H2O = a ribonucleoside 5'-phosphate + diphosphate + H(+). The enzyme catalyses a 2'-deoxyribonucleoside 5'-triphosphate + H2O = a 2'-deoxyribonucleoside 5'-phosphate + diphosphate + H(+). Nucleoside triphosphate pyrophosphatase. May have a dual role in cell division arrest and in preventing the incorporation of modified nucleotides into cellular nucleic acids. The protein is Nucleoside triphosphate pyrophosphatase of Synechococcus sp. (strain CC9605).